A 154-amino-acid polypeptide reads, in one-letter code: Transcription antitermination protein NusB (154 aa).

The tract at residues 132-154 is disordered; that stretch reads KDKQSPQSTPLDDSDKDESDQTN. The span at 143–154 shows a compositional bias: acidic residues; sequence DDSDKDESDQTN.

This sequence belongs to the NusB family.

Involved in transcription antitermination. Required for transcription of ribosomal RNA (rRNA) genes. Binds specifically to the boxA antiterminator sequence of the ribosomal RNA (rrn) operons. The chain is Transcription antitermination protein NusB from Bifidobacterium animalis subsp. lactis (strain AD011).